The following is a 777-amino-acid chain: Isoamylase (777 aa).

Residues M1–A32 form the signal peptide. Ca(2+) is bound by residues D162, E263, T264, N266, and D293. D410 acts as the Nucleophile in catalysis. A disulfide bridge links C419 with C423. E458 (proton donor) is an active-site residue.

Belongs to the glycosyl hydrolase 13 family. In terms of assembly, monomer. Requires Ca(2+) as cofactor.

The enzyme catalyses Hydrolysis of (1-&gt;6)-alpha-D-glucosidic branch linkages in glycogen, amylopectin and their beta-limit dextrins.. Functionally, has a high rate of hydrolysis for glycogen. Does not cleave pullulan. In Flavobacterium sp, this protein is Isoamylase (iam).